The sequence spans 299 residues: Protease HtpX homolog (299 aa).

The next 2 membrane-spanning stretches (helical) occupy residues 19 to 39 and 41 to 61; these read LFIVLFSLILFAVGYFFVWYF and WGITGIIFLAIFIVLYNWIAY. Position 146 (H146) interacts with Zn(2+). E147 is a catalytic residue. Position 150 (H150) interacts with Zn(2+). Transmembrane regions (helical) follow at residues 156–176 and 198–218; these read ILLMTVVAIVAGLIILLRDVF and IILLLIGLILSIIAPIVVLII. E227 is a binding site for Zn(2+).

The protein belongs to the peptidase M48B family. It depends on Zn(2+) as a cofactor.

It localises to the cell membrane. The chain is Protease HtpX homolog from Caldanaerobacter subterraneus subsp. tengcongensis (strain DSM 15242 / JCM 11007 / NBRC 100824 / MB4) (Thermoanaerobacter tengcongensis).